Reading from the N-terminus, the 1211-residue chain is DNA-directed RNA polymerase subunit beta' (1211 aa).

Zn(2+)-binding residues include C60, C62, C75, and C78. 3 residues coordinate Mg(2+): D450, D452, and D454. C819, C893, C900, and C903 together coordinate Zn(2+).

It belongs to the RNA polymerase beta' chain family. The RNAP catalytic core consists of 2 alpha, 1 beta, 1 beta' and 1 omega subunit. When a sigma factor is associated with the core the holoenzyme is formed, which can initiate transcription. It depends on Mg(2+) as a cofactor. Zn(2+) is required as a cofactor.

It catalyses the reaction RNA(n) + a ribonucleoside 5'-triphosphate = RNA(n+1) + diphosphate. Its function is as follows. DNA-dependent RNA polymerase catalyzes the transcription of DNA into RNA using the four ribonucleoside triphosphates as substrates. The polypeptide is DNA-directed RNA polymerase subunit beta' (Streptococcus equi subsp. equi (strain 4047)).